Reading from the N-terminus, the 348-residue chain is MTYNIVALPGDGIGPEILNGSLSLLEIISNKYNFNYQIEHHEFGGASIDTFGEPLTEKTLNACKRADAILLGAIGGPKWTDPNNRPEQGLLKLRKSLNLFANIRPTTVFKGASSLSPLKQERVEGTDLVIVRELTSGIYFGEPRHFNNHEALDSLTYTREEIERIVHVAFKLAASRRGKLTSVDKENVLASSKLWRKVVNEVSQLYPEVTVNHLLVDACSMHLITNPKQFDVIVCENLFGDILSDEASVIPGSLGLSPSASFSNDGPRLYEPIHGSAPDIAGKNVANPFGMILSLAMCLRESLNQPDAADELEQHIYNMIENGQTTADLGGKLNTTDIFEILSQKLNH.

76-87 (GPKWTDPNNRPE) contributes to the NAD(+) binding site. Positions 94, 104, 132, and 217 each coordinate substrate. Mg(2+) contacts are provided by aspartate 217, aspartate 241, and aspartate 245. An NAD(+)-binding site is contributed by 275–287 (GSAPDIAGKNVAN).

The protein belongs to the isocitrate and isopropylmalate dehydrogenases family. LeuB type 1 subfamily. As to quaternary structure, homodimer. Mg(2+) serves as cofactor. Mn(2+) is required as a cofactor.

The protein resides in the cytoplasm. It carries out the reaction (2R,3S)-3-isopropylmalate + NAD(+) = 4-methyl-2-oxopentanoate + CO2 + NADH. It participates in amino-acid biosynthesis; L-leucine biosynthesis; L-leucine from 3-methyl-2-oxobutanoate: step 3/4. Its function is as follows. Catalyzes the oxidation of 3-carboxy-2-hydroxy-4-methylpentanoate (3-isopropylmalate) to 3-carboxy-4-methyl-2-oxopentanoate. The product decarboxylates to 4-methyl-2 oxopentanoate. The protein is 3-isopropylmalate dehydrogenase of Staphylococcus aureus (strain bovine RF122 / ET3-1).